The chain runs to 144 residues: SsrA-binding protein (144 aa).

Belongs to the SmpB family.

Its subcellular location is the cytoplasm. Its function is as follows. Required for rescue of stalled ribosomes mediated by trans-translation. Binds to transfer-messenger RNA (tmRNA), required for stable association of tmRNA with ribosomes. tmRNA and SmpB together mimic tRNA shape, replacing the anticodon stem-loop with SmpB. tmRNA is encoded by the ssrA gene; the 2 termini fold to resemble tRNA(Ala) and it encodes a 'tag peptide', a short internal open reading frame. During trans-translation Ala-aminoacylated tmRNA acts like a tRNA, entering the A-site of stalled ribosomes, displacing the stalled mRNA. The ribosome then switches to translate the ORF on the tmRNA; the nascent peptide is terminated with the 'tag peptide' encoded by the tmRNA and targeted for degradation. The ribosome is freed to recommence translation, which seems to be the essential function of trans-translation. This chain is SsrA-binding protein, found in Thermus thermophilus (strain ATCC BAA-163 / DSM 7039 / HB27).